Here is a 264-residue protein sequence, read N- to C-terminus: Thymidylate synthase (264 aa).

Arg-21 provides a ligand contact to dUMP. His-51 is a binding site for (6R)-5,10-methylene-5,6,7,8-tetrahydrofolate. 126–127 contributes to the dUMP binding site; the sequence is RR. Cys-146 serves as the catalytic Nucleophile. DUMP contacts are provided by residues 166–169, Asn-177, and 207–209; these read RSAD and HIY. Asp-169 is a (6R)-5,10-methylene-5,6,7,8-tetrahydrofolate binding site. Ala-263 provides a ligand contact to (6R)-5,10-methylene-5,6,7,8-tetrahydrofolate.

It belongs to the thymidylate synthase family. Bacterial-type ThyA subfamily. As to quaternary structure, homodimer.

It is found in the cytoplasm. It carries out the reaction dUMP + (6R)-5,10-methylene-5,6,7,8-tetrahydrofolate = 7,8-dihydrofolate + dTMP. It functions in the pathway pyrimidine metabolism; dTTP biosynthesis. Its function is as follows. Catalyzes the reductive methylation of 2'-deoxyuridine-5'-monophosphate (dUMP) to 2'-deoxythymidine-5'-monophosphate (dTMP) while utilizing 5,10-methylenetetrahydrofolate (mTHF) as the methyl donor and reductant in the reaction, yielding dihydrofolate (DHF) as a by-product. This enzymatic reaction provides an intracellular de novo source of dTMP, an essential precursor for DNA biosynthesis. The protein is Thymidylate synthase of Agrobacterium fabrum (strain C58 / ATCC 33970) (Agrobacterium tumefaciens (strain C58)).